A 267-amino-acid chain; its full sequence is MPTGKLRQKPPYAAIMTNSPVTPSTETQQPKRDALYARFLPQEADAPPVEWLIAEGLTDYEEALAFMEARVQATREGTASELVWLVEHPPLYTAGTSANAEDLLTPDRFPVFNTGRGGEYTYHGPGQRVAYVMLDLKRRREDVRAFVASLEQWIIETLAAFNIKGERREDRVGVWVVRPEKPRLADGSMCEDKIAAIGIRLRRWVSFHGIAINVEPDLSHYGGIVPCGISEHGVTSLVDLGLPVTMGDVDVALGKAFESVFGPRQTK.

The interval Met-1 to Pro-30 is disordered. The span at Met-16–Gln-28 shows a compositional bias: polar residues. In terms of domain architecture, BPL/LPL catalytic spans Gly-77–Gln-265. Residues Arg-116 to His-123, Ala-196 to Gly-198, and Gly-209 to Ala-211 each bind substrate. Cys-227 acts as the Acyl-thioester intermediate in catalysis.

It belongs to the LipB family.

It is found in the cytoplasm. It catalyses the reaction octanoyl-[ACP] + L-lysyl-[protein] = N(6)-octanoyl-L-lysyl-[protein] + holo-[ACP] + H(+). Its pathway is protein modification; protein lipoylation via endogenous pathway; protein N(6)-(lipoyl)lysine from octanoyl-[acyl-carrier-protein]: step 1/2. Its function is as follows. Catalyzes the transfer of endogenously produced octanoic acid from octanoyl-acyl-carrier-protein onto the lipoyl domains of lipoate-dependent enzymes. Lipoyl-ACP can also act as a substrate although octanoyl-ACP is likely to be the physiological substrate. The sequence is that of Octanoyltransferase from Brucella abortus biovar 1 (strain 9-941).